The sequence spans 193 residues: Frataxin, mitochondrial (193 aa).

The N-terminal 72 residues, 1–72 (MIFNFLNKAS…KQQQQLSKSF (72 aa)), are a transit peptide targeting the mitochondrion.

The protein belongs to the frataxin family. In terms of assembly, monomer. Oligomer.

It is found in the mitochondrion. It catalyses the reaction 4 Fe(2+) + O2 + 4 H(+) = 4 Fe(3+) + 2 H2O. Functionally, promotes the biosynthesis of heme as well as the assembly and repair of iron-sulfur clusters by delivering Fe(2+) to proteins involved in these pathways. May play a role in the protection against iron-catalyzed oxidative stress through its ability to catalyze the oxidation of Fe(2+) to Fe(3+). May be able to store large amounts of the metal in the form of a ferrihydrite mineral by oligomerization. This chain is Frataxin, mitochondrial (fxn), found in Dictyostelium discoideum (Social amoeba).